Here is a 225-residue protein sequence, read N- to C-terminus: UPF0758 protein Sez_1052 (225 aa).

The MPN domain maps to 102-224; it reads PVLSSAQVAE…YYSFREKSDL (123 aa). The Zn(2+) site is built by H173, H175, and D186. A JAMM motif motif is present at residues 173–186; the sequence is HNHPSGLTKPSAND.

It belongs to the UPF0758 family.

The protein is UPF0758 protein Sez_1052 of Streptococcus equi subsp. zooepidemicus (strain MGCS10565).